The following is a 271-amino-acid chain: 4-hydroxy-tetrahydrodipicolinate reductase (271 aa).

NAD(+)-binding positions include 11–16 (GGSGRM) and E37. R38 serves as a coordination point for NADP(+). Residues 101-103 (GTT) and 125-128 (APNM) each bind NAD(+). H158 acts as the Proton donor/acceptor in catalysis. H159 contacts (S)-2,3,4,5-tetrahydrodipicolinate. The active-site Proton donor is the K162. Residue 168–169 (GT) participates in (S)-2,3,4,5-tetrahydrodipicolinate binding.

It belongs to the DapB family.

The protein localises to the cytoplasm. The catalysed reaction is (S)-2,3,4,5-tetrahydrodipicolinate + NAD(+) + H2O = (2S,4S)-4-hydroxy-2,3,4,5-tetrahydrodipicolinate + NADH + H(+). The enzyme catalyses (S)-2,3,4,5-tetrahydrodipicolinate + NADP(+) + H2O = (2S,4S)-4-hydroxy-2,3,4,5-tetrahydrodipicolinate + NADPH + H(+). It functions in the pathway amino-acid biosynthesis; L-lysine biosynthesis via DAP pathway; (S)-tetrahydrodipicolinate from L-aspartate: step 4/4. Functionally, catalyzes the conversion of 4-hydroxy-tetrahydrodipicolinate (HTPA) to tetrahydrodipicolinate. The chain is 4-hydroxy-tetrahydrodipicolinate reductase from Shewanella loihica (strain ATCC BAA-1088 / PV-4).